The chain runs to 108 residues: UPF0060 membrane protein DSY4157 (108 aa).

4 consecutive transmembrane segments (helical) span residues 6 to 26 (ILFI…WLWL), 31 to 51 (PYWY…IPTL), 60 to 80 (VYAA…WGVD), and 86 to 106 (TYDW…LWAP).

The protein belongs to the UPF0060 family.

The protein localises to the cell membrane. The protein is UPF0060 membrane protein DSY4157 of Desulfitobacterium hafniense (strain Y51).